Here is a 74-residue protein sequence, read N- to C-terminus: MPSNCEILCEIIIAILLPPLGVCFRKGCCTVEFLICLVLTILGYVPGIIYAIYVIVFQHREEYFDEYRRPIYSA.

The next 2 membrane-spanning stretches (helical) occupy residues 4–24 (NCEI…GVCF) and 37–57 (LVLT…VIVF).

Belongs to the UPF0057 (PMP3) family.

It is found in the membrane. The polypeptide is UPF0057 membrane protein At4g30660 (Arabidopsis thaliana (Mouse-ear cress)).